The following is a 245-amino-acid chain: Dehydrogenase/reductase SDR family member 6 (245 aa).

NAD(+)-binding positions include 16–18, Asp37, and Asp58; that span reads QGI. Arg144 lines the substrate pocket. The active-site Proton acceptor is the Tyr147. NAD(+) contacts are provided by residues Lys151 and 180-184; that span reads VDTPS. Residues Arg188 and Arg205 each contribute to the substrate site.

This sequence belongs to the short-chain dehydrogenases/reductases (SDR) family. As to quaternary structure, homotetramer.

The protein resides in the cytoplasm. The enzyme catalyses cis-4-hydroxy-L-proline + NAD(+) = 4-oxo-L-proline + NADH + H(+). It catalyses the reaction (R)-3-hydroxybutanoate + NAD(+) = acetoacetate + NADH + H(+). Its pathway is amino-acid metabolism. It participates in siderophore biosynthesis. Functionally, NAD(H)-dependent dehydrogenase/reductase with a preference for cyclic substrates. Catalyzes stereoselective conversion of 4-oxo-L-proline to cis-4-hydroxy-L-proline, likely a detoxification mechanism for ketoprolines. Mediates the formation of 2,5-dihydroxybenzoate (2,5-DHBA), a siderophore that chelates free cytoplasmic iron and associates with LCN2, thereby regulating iron transport and homeostasis while protecting cells against free radical-induced oxidative stress. The iron-siderophore complex is imported into mitochondria, providing an iron source for mitochondrial metabolic processes in particular heme synthesis. May act as a 3-hydroxybutyrate dehydrogenase. This Rattus norvegicus (Rat) protein is Dehydrogenase/reductase SDR family member 6.